Reading from the N-terminus, the 297-residue chain is Phosphoribosylaminoimidazole-succinocarboxamide synthase (297 aa).

This sequence belongs to the SAICAR synthetase family.

It carries out the reaction 5-amino-1-(5-phospho-D-ribosyl)imidazole-4-carboxylate + L-aspartate + ATP = (2S)-2-[5-amino-1-(5-phospho-beta-D-ribosyl)imidazole-4-carboxamido]succinate + ADP + phosphate + 2 H(+). It functions in the pathway purine metabolism; IMP biosynthesis via de novo pathway; 5-amino-1-(5-phospho-D-ribosyl)imidazole-4-carboxamide from 5-amino-1-(5-phospho-D-ribosyl)imidazole-4-carboxylate: step 1/2. The polypeptide is Phosphoribosylaminoimidazole-succinocarboxamide synthase (Mycobacterium sp. (strain KMS)).